A 443-amino-acid chain; its full sequence is Protein translocase subunit SecY (443 aa).

A run of 10 helical transmembrane segments spans residues 24-44 (LFVIGALIVFRIGSFIPIPGI), 77-97 (IFALGIMPYISASIIIQLLTV), 125-145 (LVLAIFQSIGIATGLPNMPGM), 154-174 (FAFYFTAVVSLVTGTMFLMWL), 183-203 (IGNGISIIIFAGIVAGLPPAI), 217-237 (FLVLLLVAVLVFAVTFFVVFV), 274-294 (VIPAIFASSIILFPATIASWF), 317-337 (YVLLYASAIIFFCFFYTALVF), 370-390 (MTRLTLVGALYITFICLIPEF), and 397-417 (VPFYFGGTSLLIVVVVIMDFM).

The protein belongs to the SecY/SEC61-alpha family. Component of the Sec protein translocase complex. Heterotrimer consisting of SecY, SecE and SecG subunits. The heterotrimers can form oligomers, although 1 heterotrimer is thought to be able to translocate proteins. Interacts with the ribosome. Interacts with SecDF, and other proteins may be involved. Interacts with SecA.

Its subcellular location is the cell inner membrane. Its function is as follows. The central subunit of the protein translocation channel SecYEG. Consists of two halves formed by TMs 1-5 and 6-10. These two domains form a lateral gate at the front which open onto the bilayer between TMs 2 and 7, and are clamped together by SecE at the back. The channel is closed by both a pore ring composed of hydrophobic SecY resides and a short helix (helix 2A) on the extracellular side of the membrane which forms a plug. The plug probably moves laterally to allow the channel to open. The ring and the pore may move independently. In Escherichia coli O157:H7, this protein is Protein translocase subunit SecY.